The primary structure comprises 153 residues: uncharacterized protein (153 aa).

A signal peptide spans 1–22 (MKLLKKGTTVLFVMIMAVMLVA). The N-palmitoyl cysteine moiety is linked to residue C23. C23 is lipidated: S-diacylglycerol cysteine. The tract at residues 121–153 (LPGMASTGDVSKGISMKESEKMLKSQGFKEVEK) is disordered. Over residues 135–153 (SMKESEKMLKSQGFKEVEK) the composition is skewed to basic and acidic residues.

To E.coli YehR.

Its subcellular location is the cell membrane. This is an uncharacterized protein from Listeria innocua serovar 6a (strain ATCC BAA-680 / CLIP 11262).